Here is a 591-residue protein sequence, read N- to C-terminus: F420 non-reducing hydrogenase II large subunit (591 aa).

Residue Glu42 participates in Mg(2+) binding. Residues Cys61, Cys64, Cys569, and Cys572 each coordinate Ni(2+). Fe cation is bound at residue Cys64. Cys572 contributes to the Fe cation binding site. Residue His575 coordinates Mg(2+).

The protein belongs to the [NiFe]/[NiFeSe] hydrogenase large subunit family. As to quaternary structure, composed of a large subunit (VhtA), a small subunit (VhtG) and a cytochrome subunit (VhtC). Ni(2+) serves as cofactor. The cofactor is Fe cation.

The protein localises to the cell membrane. It catalyses the reaction methanophenazine + H2 = dihydromethanophenazine. Part of the F420 non-reducing hydrogenase II complex that catalyzes the reduction of methanophenazine to dihydromethanophenazine. In Methanosarcina mazei (strain ATCC BAA-159 / DSM 3647 / Goe1 / Go1 / JCM 11833 / OCM 88) (Methanosarcina frisia), this protein is F420 non-reducing hydrogenase II large subunit.